Consider the following 161-residue polypeptide: Allophycocyanin alpha chain (161 aa).

Asn-71 is subject to N4-methylasparagine. Cys-81 contacts (2R,3E)-phycocyanobilin.

The protein belongs to the phycobiliprotein family. As to quaternary structure, heterodimer of an alpha and a beta chain. In terms of processing, contains one covalently linked phycocyanobilin chromophore.

Its subcellular location is the cellular thylakoid membrane. Functionally, light-harvesting photosynthetic bile pigment-protein from the phycobiliprotein complex. Allophycocyanin has a maximum absorption at approximately 650 nanometers. The polypeptide is Allophycocyanin alpha chain (apcA) (Synechocystis sp. (strain ATCC 27184 / PCC 6803 / Kazusa)).